The chain runs to 84 residues: Small ribosomal subunit protein uS17 (84 aa).

The protein belongs to the universal ribosomal protein uS17 family. Part of the 30S ribosomal subunit.

One of the primary rRNA binding proteins, it binds specifically to the 5'-end of 16S ribosomal RNA. The polypeptide is Small ribosomal subunit protein uS17 (Vibrio cholerae serotype O1 (strain ATCC 39541 / Classical Ogawa 395 / O395)).